The following is a 148-amino-acid chain: Leghemoglobin 3 (148 aa).

Residues 2–148 (GFTEKQEALV…LSAAIKKAMS (147 aa)) form the Globin domain. Tyr30 is modified (nitrated tyrosine). Ser45 contributes to the heme b binding site. Ser45 bears the Phosphoserine mark. His63 contributes to the O2 binding site. Residues Lys66, His95, and Lys98 each contribute to the heme b site. Tyr136 is modified (nitrated tyrosine).

The protein belongs to the plant globin family. Monomer. Nitrated in effective nodules and particularly in hypoxic conditions; this mechanism may play a protective role in the symbiosis by buffering toxic peroxynitrite NO(2)(-). Nitration level decrease during nodule senescence. In terms of processing, phosphorylation at Ser-45 disrupts the molecular environment of its porphyrin ring oxygen binding pocket, thus leading to a reduced oxygen consumption and to the delivery of oxygen O(2) to symbiosomes. In terms of tissue distribution, stem nodules.

It is found in the cytoplasm. The protein localises to the cytosol. The protein resides in the nucleus. In terms of biological role, leghemoglobin that reversibly binds oxygen O(2) through a pentacoordinated heme iron. In stem nodules, facilitates the diffusion of oxygen to the bacteroids while preventing the bacterial nitrogenase from being inactivated by buffering dioxygen, nitric oxide and carbon monoxide, and promoting the formation of reactive oxygen species (ROS, e.g. H(2)O(2)). This role is essential for symbiotic nitrogen fixation (SNF). The polypeptide is Leghemoglobin 3 (Sesbania rostrata).